Reading from the N-terminus, the 164-residue chain is Neurotrophin-3 (164 aa).

An N-terminal signal peptide occupies residues Ile-1–Ser-3. A propeptide spanning residues Thr-4–Arg-120 is cleaved from the precursor. The N-linked (GlcNAc...) asparagine glycan is linked to Asn-113.

This sequence belongs to the NGF-beta family.

It is found in the secreted. Its function is as follows. Seems to promote the survival of visceral and proprioceptive sensory neurons. This is Neurotrophin-3 (NTF3) from Sanzinia madagascariensis (Madagascar tree boa).